A 1890-amino-acid polypeptide reads, in one-letter code: DNA polymerase zeta catalytic subunit (1890 aa).

Polar residues-rich tracts occupy residues 508-533 and 549-560; these read QENL…NLRT and PDSSTSNGASEN. 2 disordered regions span residues 508 to 565 and 922 to 942; these read QENL…FRRY and GDSN…DRGA. Residues 922–940 are compositionally biased toward basic and acidic residues; that stretch reads GDSNIDSEKQPLRDNHNDR. Residues cysteine 1789, cysteine 1792, cysteine 1803, and cysteine 1806 each coordinate Zn(2+). A CysA-type zinc finger spans residues 1789 to 1806; the sequence is CILCGEVVQESAQLCNRC. Positions 1835, 1838, 1851, and 1856 each coordinate [4Fe-4S] cluster. Residues 1835 to 1856 carry the CysB motif motif; that stretch reads CRHCGGGDWVVQSGVKCNSLAC.

It belongs to the DNA polymerase type-B family. In terms of assembly, forms DNA polymerase zeta with REV7. It depends on [4Fe-4S] cluster as a cofactor. In terms of tissue distribution, expressed in roots, leaves and flowers.

It localises to the nucleus. It catalyses the reaction DNA(n) + a 2'-deoxyribonucleoside 5'-triphosphate = DNA(n+1) + diphosphate. Catalytic subunit of the error prone DNA polymerase zeta. Involved in damage-tolerance mechanisms through translesion DNA synthesis. In Arabidopsis thaliana (Mouse-ear cress), this protein is DNA polymerase zeta catalytic subunit (REV3).